The chain runs to 438 residues: Coiled-coil domain-containing protein 78 (438 aa).

Coiled-coil stretches lie at residues 74–105 and 217–246; these read HLHE…LRGD and SCQG…YVLR. Positions 345-381 are disordered; sequence FSHREDQHGGPGALLSSPKKRPGGASQGGTSEPQGLD.

It belongs to the CCDC78 family. As to expression, expressed primarily in skeletal muscle.

It localises to the cytoplasm. Its subcellular location is the cytoskeleton. The protein resides in the microtubule organizing center. The protein localises to the centrosome. It is found in the centriole. It localises to the perinuclear region. Its subcellular location is the cell membrane. The protein resides in the sarcolemma. The protein localises to the sarcoplasmic reticulum. Its function is as follows. Component of the deuterosome, a structure that promotes de novo centriole amplification in multiciliated cells that can generate more than 100 centrioles. Deuterosome-mediated centriole amplification occurs in terminally differentiated multiciliated cells (G1/0) and not in S phase. Essential for centriole amplification and is required for CEP152 localization to the deuterosome. The polypeptide is Coiled-coil domain-containing protein 78 (CCDC78) (Homo sapiens (Human)).